We begin with the raw amino-acid sequence, 267 residues long: Putative metal-binding protein TM_0123 (267 aa).

Positions 1 to 15 (MKKILLLLVLIVAVL) are cleaved as a signal peptide. A divalent metal cation is bound by residues H53, H107, and H172.

Belongs to the bacterial solute-binding protein 9 family.

It is found in the periplasm. Functionally, part of an ATP-binding cassette (ABC) transport system involved in metal import. Binds a metal with high affinity and specificity and delivers it to the membrane permease for translocation into the cytoplasm. The protein is Putative metal-binding protein TM_0123 of Thermotoga maritima (strain ATCC 43589 / DSM 3109 / JCM 10099 / NBRC 100826 / MSB8).